The chain runs to 194 residues: Ribonuclease HII (194 aa).

The RNase H type-2 domain occupies 1–194; that stretch reads MTVGVDEVGR…RLFPRDDGLR (194 aa). A divalent metal cation contacts are provided by D6, E7, and D102.

It belongs to the RNase HII family. Mn(2+) serves as cofactor. Requires Mg(2+) as cofactor.

It localises to the cytoplasm. The catalysed reaction is Endonucleolytic cleavage to 5'-phosphomonoester.. In terms of biological role, endonuclease that specifically degrades the RNA of RNA-DNA hybrids. The chain is Ribonuclease HII from Synechococcus sp. (strain WH7803).